The sequence spans 316 residues: 4-hydroxy-3-methylbut-2-enyl diphosphate reductase (316 aa).

Cysteine 12 is a [4Fe-4S] cluster binding site. (2E)-4-hydroxy-3-methylbut-2-enyl diphosphate contacts are provided by histidine 43 and histidine 81. Dimethylallyl diphosphate contacts are provided by histidine 43 and histidine 81. Histidine 43 and histidine 81 together coordinate isopentenyl diphosphate. Cysteine 103 contacts [4Fe-4S] cluster. Histidine 131 contributes to the (2E)-4-hydroxy-3-methylbut-2-enyl diphosphate binding site. Histidine 131 provides a ligand contact to dimethylallyl diphosphate. An isopentenyl diphosphate-binding site is contributed by histidine 131. Glutamate 133 acts as the Proton donor in catalysis. Threonine 170 is a binding site for (2E)-4-hydroxy-3-methylbut-2-enyl diphosphate. Cysteine 198 contributes to the [4Fe-4S] cluster binding site. The (2E)-4-hydroxy-3-methylbut-2-enyl diphosphate site is built by serine 226, asparagine 228, and serine 271. Dimethylallyl diphosphate-binding residues include serine 226, asparagine 228, and serine 271. Residues serine 226, asparagine 228, and serine 271 each coordinate isopentenyl diphosphate.

It belongs to the IspH family. The cofactor is [4Fe-4S] cluster.

The enzyme catalyses isopentenyl diphosphate + 2 oxidized [2Fe-2S]-[ferredoxin] + H2O = (2E)-4-hydroxy-3-methylbut-2-enyl diphosphate + 2 reduced [2Fe-2S]-[ferredoxin] + 2 H(+). It carries out the reaction dimethylallyl diphosphate + 2 oxidized [2Fe-2S]-[ferredoxin] + H2O = (2E)-4-hydroxy-3-methylbut-2-enyl diphosphate + 2 reduced [2Fe-2S]-[ferredoxin] + 2 H(+). It participates in isoprenoid biosynthesis; dimethylallyl diphosphate biosynthesis; dimethylallyl diphosphate from (2E)-4-hydroxy-3-methylbutenyl diphosphate: step 1/1. Its pathway is isoprenoid biosynthesis; isopentenyl diphosphate biosynthesis via DXP pathway; isopentenyl diphosphate from 1-deoxy-D-xylulose 5-phosphate: step 6/6. Its function is as follows. Catalyzes the conversion of 1-hydroxy-2-methyl-2-(E)-butenyl 4-diphosphate (HMBPP) into a mixture of isopentenyl diphosphate (IPP) and dimethylallyl diphosphate (DMAPP). Acts in the terminal step of the DOXP/MEP pathway for isoprenoid precursor biosynthesis. This Bacillus thuringiensis (strain Al Hakam) protein is 4-hydroxy-3-methylbut-2-enyl diphosphate reductase.